The chain runs to 399 residues: S-adenosylmethionine synthase (399 aa).

ATP is bound at residue His15. Asp17 provides a ligand contact to Mg(2+). K(+) is bound at residue Glu43. L-methionine-binding residues include Glu56 and Gln99. The flexible loop stretch occupies residues 99–109 (QSPDIAGGVDH). ATP is bound by residues 175–177 (DAK), 242–243 (RF), Asp251, 257–258 (RK), Ala274, and Lys278. Residue Asp251 coordinates L-methionine. Lys282 lines the L-methionine pocket.

It belongs to the AdoMet synthase family. In terms of assembly, homotetramer; dimer of dimers. Mg(2+) is required as a cofactor. Requires K(+) as cofactor.

The protein localises to the cytoplasm. It carries out the reaction L-methionine + ATP + H2O = S-adenosyl-L-methionine + phosphate + diphosphate. The protein operates within amino-acid biosynthesis; S-adenosyl-L-methionine biosynthesis; S-adenosyl-L-methionine from L-methionine: step 1/1. Catalyzes the formation of S-adenosylmethionine (AdoMet) from methionine and ATP. The overall synthetic reaction is composed of two sequential steps, AdoMet formation and the subsequent tripolyphosphate hydrolysis which occurs prior to release of AdoMet from the enzyme. This is S-adenosylmethionine synthase from Lactobacillus helveticus (strain DPC 4571).